A 1097-amino-acid polypeptide reads, in one-letter code: DNA-directed RNA polymerase subunit beta (1097 aa).

A disordered region spans residues 1072-1097 (QDVNPRRSTPSRPTYESLGVADYDED).

It belongs to the RNA polymerase beta chain family. In terms of assembly, in cyanobacteria the RNAP catalytic core is composed of 2 alpha, 1 beta, 1 beta', 1 gamma and 1 omega subunit. When a sigma factor is associated with the core the holoenzyme is formed, which can initiate transcription.

The enzyme catalyses RNA(n) + a ribonucleoside 5'-triphosphate = RNA(n+1) + diphosphate. In terms of biological role, DNA-dependent RNA polymerase catalyzes the transcription of DNA into RNA using the four ribonucleoside triphosphates as substrates. This is DNA-directed RNA polymerase subunit beta from Synechococcus sp. (strain CC9902).